The primary structure comprises 119 residues: cAMP-responsive element-binding protein-like 2 (119 aa).

The tract at residues 1–23 (MDDSKIVAGKVKKPGKRGRKPAK) is disordered. Positions 10–21 (KVKKPGKRGRKP) are enriched in basic residues. Positions 23-86 (KIDLKAKLER…LAMDQGKIPS (64 aa)) constitute a bZIP domain. The basic motif stretch occupies residues 29 to 60 (KLERSRQSARECRARKKLRYQYLEELVSSKER). The segment at 62–69 (ICALREEL) is leucine-zipper. Residues 95–119 (DEQKTPQSCSNKTTKNSKYSSSSGI) form a disordered region. A compositionally biased stretch (low complexity) spans 102 to 119 (SCSNKTTKNSKYSSSSGI).

The protein belongs to the bZIP family. ATF subfamily.

The protein resides in the nucleus. Its function is as follows. Probable regulator of creb1 transcriptional activity which is involved in adipose cells differentiation. May also play a regulatory role in the cell cycle. The sequence is that of cAMP-responsive element-binding protein-like 2 (crebl2) from Danio rerio (Zebrafish).